A 749-amino-acid polypeptide reads, in one-letter code: Probable serine/threonine-protein kinase drkC (749 aa).

An N-terminal signal peptide occupies residues 1 to 31; sequence MIIINKYIRMNKIAILFSFFILICCTGYSIS. Residues 32–423 are Extracellular-facing; sequence YKINGINENK…TSPNYQKIIY (392 aa). The segment at 124 to 153 is disordered; it reads DRTDQVSTSSSSSSFSEENKKSSSDDSAPA. Over residues 130-139 the composition is skewed to low complexity; the sequence is STSSSSSSFS. N-linked (GlcNAc...) asparagine glycans are attached at residues Asn-157, Asn-189, Asn-283, Asn-358, Asn-373, Asn-381, and Asn-397. Residues 424–444 form a helical membrane-spanning segment; that stretch reads IVVGVGIAVLLIIAVGIYFII. The Cytoplasmic portion of the chain corresponds to 445–749; the sequence is RLRIKNKRLN…QEIVKRLEAM (305 aa). The Protein kinase domain occupies 491 to 749; it reads IVVQNRIGRG…QEIVKRLEAM (259 aa). Residues 497 to 505 and Lys-518 contribute to the ATP site; that span reads IGRGSCAEV. Asp-615 functions as the Proton acceptor in the catalytic mechanism.

It belongs to the protein kinase superfamily. TKL Ser/Thr protein kinase family.

Its subcellular location is the membrane. The enzyme catalyses L-seryl-[protein] + ATP = O-phospho-L-seryl-[protein] + ADP + H(+). It catalyses the reaction L-threonyl-[protein] + ATP = O-phospho-L-threonyl-[protein] + ADP + H(+). This is Probable serine/threonine-protein kinase drkC (drkC) from Dictyostelium discoideum (Social amoeba).